The chain runs to 736 residues: Gephyrin (736 aa).

The interval 14-166 (QIRVGVLTVS…FILPALPHAI (153 aa)) is MPT Mo-transferase. Positions 140–316 (LIINLPGSKK…VDITKVARRH (177 aa)) are interaction with GABARAP. 2 disordered regions span residues 181–232 (DELE…DSSS) and 260–290 (TASL…PKVQ). The span at 187–199 (PSPPPPLSPPPTT) shows a compositional bias: pro residues. Phosphoserine occurs at positions 188 and 194. Thr198 carries the post-translational modification Phosphothreonine. Ser200 carries the phosphoserine modification. The S-palmitoyl cysteine moiety is linked to residue Cys212. The span at 261 to 290 (ASLSTTPSESPRAQATSRLSTASCPTPKVQ) shows a compositional bias: polar residues. Phosphoserine is present on Ser262. A phosphothreonine mark is found at Thr265 and Thr266. Residues Ser268 and Ser270 each carry the phosphoserine modification. Cys284 carries S-palmitoyl cysteine lipidation. A Phosphoserine modification is found at Ser305. The MPT adenylyltransferase stretch occupies residues 326-736 (MDKAFITVLE…VVDVMVIGRL (411 aa)).

It in the N-terminal section; belongs to the MoaB/Mog family. The protein in the C-terminal section; belongs to the MoeA family. In terms of assembly, homotrimer, homodimer and homooligomer. Interacts with GABARAP. Interacts with SRGAP2 (via SH3 domain). Interacts with GABRA3. Interacts with GLRB. GABRA3 and GLRB occupy overlapping binding sites. Interacts with ARHGAP32; IQSEC3, INSYN1 and INSYN2A. The cofactor is Mg(2+). Palmitoylated. Palmitoylation is stimulated by GABA type A receptors activity. Palmitoylation by ZDHHC12 regulates clustering at synapses.

It localises to the postsynaptic cell membrane. Its subcellular location is the cell membrane. The protein localises to the cytoplasm. The protein resides in the cytosol. It is found in the cytoskeleton. It localises to the cell projection. Its subcellular location is the dendrite. The protein localises to the postsynaptic density. It catalyses the reaction molybdopterin + ATP + H(+) = adenylyl-molybdopterin + diphosphate. The enzyme catalyses adenylyl-molybdopterin + molybdate = Mo-molybdopterin + AMP + H(+). It functions in the pathway cofactor biosynthesis; molybdopterin biosynthesis. With respect to regulation, inhibited by copper and tungsten. In terms of biological role, microtubule-associated protein involved in membrane protein-cytoskeleton interactions. It is thought to anchor the inhibitory glycine receptor (GLYR) to subsynaptic microtubules. Acts as a major instructive molecule at inhibitory synapses, where it also clusters GABA type A receptors. Functionally, also has a catalytic activity and catalyzes two steps in the biosynthesis of the molybdenum cofactor. In the first step, molybdopterin is adenylated. Subsequently, molybdate is inserted into adenylated molybdopterin and AMP is released. This Homo sapiens (Human) protein is Gephyrin.